A 398-amino-acid polypeptide reads, in one-letter code: MAAFKTLDDIGNISGKRVLVRVDLNVPVADGKVTDATRIERIAPTIAELSGKGAKVILLAHFGRPKDGPSPEFSLEPIARATAEVLGRPVGFASDCVGDMAGSAVAAMNKGDVLLFENTRFYKAEEKNDPAFSERLAANGDIFVNDAFSAAHRAHSSTEGLARLLPSFAGRTMQAELEALEKGLGNPVRPVVAIVGGAKVSTKIDLLMNLVKKVDALVIGGGMANTFLAARGTDVGKSLCEHDLAPTAKQIMIEAAEAGCAIILPVDGVVAKEFKAGAACETVAISDVPADGMILDVGEKTVKTIGEWIDRAATLVWNGPLGAFEIEPFDHATVAAAKHAAARTKAGKLVSVAGGGDTVAALNHAGVADDFTYVSTAGGAFLEWMEGKPLPGVDVLKR.

Residues 23–25 (DLN), R38, 61–64 (HFGR), R120, and R153 contribute to the substrate site. Residues K203, E325, and 355–358 (GGDT) contribute to the ATP site.

Belongs to the phosphoglycerate kinase family. In terms of assembly, monomer.

The protein resides in the cytoplasm. It catalyses the reaction (2R)-3-phosphoglycerate + ATP = (2R)-3-phospho-glyceroyl phosphate + ADP. Its pathway is carbohydrate degradation; glycolysis; pyruvate from D-glyceraldehyde 3-phosphate: step 2/5. This Mesorhizobium japonicum (strain LMG 29417 / CECT 9101 / MAFF 303099) (Mesorhizobium loti (strain MAFF 303099)) protein is Phosphoglycerate kinase.